We begin with the raw amino-acid sequence, 1231 residues long: Multifunctional 2-oxoglutarate metabolism enzyme (1231 aa).

Positions 1 to 41 (MANISSPFGQNEWLVEAMYRKFRDDPSSVDPSWHEFLVDYS) are 2-oxoglutarate dehydrogenase E1, N-terminal part. Residues 24–37 (DDPSSVDPSWHEFL) show a composition bias toward basic and acidic residues. Positions 24 to 56 (DDPSSVDPSWHEFLVDYSPEPTSQPAAEPTRVT) are disordered. Positions 42 to 88 (PEPTSQPAAEPTRVTSPLVAERAAAAAPQAPPKPADTAAAGNGVVAA) are linker. The segment at 89-337 (LAAKTAVPPP…LRTIHELLLS (249 aa)) is succinyltransferase E2. The active-site Proton acceptor; for succinyltransferase activity is the H316. The tract at residues 338 to 1231 (DGFWDEVFRE…QQEILDEAFG (894 aa)) is 2-oxoglutarate dehydrogenase E1, C-terminal part. R542 is a thiamine diphosphate binding site. 2-oxoglutarate-binding residues include H581 and S606. Thiamine diphosphate contacts are provided by S606, L608, D649, A650, A651, and N682. Residue D649 coordinates Mg(2+). N682 and I684 together coordinate Mg(2+). The stretch at 787–817 (DISMKEAEDALRDYQGQLERVFNEVRELEKH) forms a coiled coil. H1024 serves as a coordination point for 2-oxoglutarate. Acetyl-CoA is bound by residues T1042, R1058, K1093, S1096, Q1146, R1153, and R1154.

Belongs to the 2-oxoacid dehydrogenase family. Kgd subfamily. In terms of assembly, homodimer. The 2-oxoglutarate dehydrogenase (ODH) complex contains multiple copies of three enzymatic components: 2-oxoglutarate dehydrogenase (E1), dihydrolipoamide succinyltransferase (E2) and lipoamide dehydrogenase (E3). The cofactor is Mg(2+). Thiamine diphosphate is required as a cofactor.

It carries out the reaction glyoxylate + 2-oxoglutarate + H(+) = 2-hydroxy-3-oxoadipate + CO2. The enzyme catalyses 2-oxoglutarate + H(+) = succinate semialdehyde + CO2. It catalyses the reaction N(6)-[(R)-lipoyl]-L-lysyl-[protein] + 2-oxoglutarate + H(+) = N(6)-[(R)-S(8)-succinyldihydrolipoyl]-L-lysyl-[protein] + CO2. The catalysed reaction is N(6)-[(R)-dihydrolipoyl]-L-lysyl-[protein] + succinyl-CoA = N(6)-[(R)-S(8)-succinyldihydrolipoyl]-L-lysyl-[protein] + CoA. It functions in the pathway carbohydrate metabolism; tricarboxylic acid cycle; succinate from 2-oxoglutarate (transferase route): step 1/2. The protein operates within carbohydrate metabolism; tricarboxylic acid cycle; succinyl-CoA from 2-oxoglutarate (dehydrogenase route): step 1/1. Its activity is regulated as follows. Alpha-ketoglutarate dehydrogenase and decarboxylase activities are inhibited by unphosphorylated GarA, and allosterically activated by acetyl-CoA, the main substrate of the TCA cycle. In terms of biological role, shows three enzymatic activities that share a first common step, the attack of thiamine-PP on 2-oxoglutarate (alpha-ketoglutarate, KG), leading to the formation of an enamine-thiamine-PP intermediate upon decarboxylation. Thus, displays KGD activity, catalyzing the decarboxylation from five-carbon 2-oxoglutarate to four-carbon succinate semialdehyde (SSA). Also catalyzes C-C bond formation between the activated aldehyde formed after decarboxylation of alpha-ketoglutarate and the carbonyl of glyoxylate (GLX), to yield 2-hydroxy-3-oxoadipate (HOA), which spontaneously decarboxylates to form 5-hydroxylevulinate (HLA). And is also a component of the 2-oxoglutarate dehydrogenase (ODH) complex, that catalyzes the overall conversion of 2-oxoglutarate to succinyl-CoA and CO(2). The KG decarboxylase and KG dehydrogenase reactions provide two alternative, tightly regulated, pathways connecting the oxidative and reductive branches of the TCA cycle. This is Multifunctional 2-oxoglutarate metabolism enzyme (kgd) from Mycobacterium bovis (strain ATCC BAA-935 / AF2122/97).